A 456-amino-acid chain; its full sequence is Probable mannan endo-1,4-beta-mannosidase F (456 aa).

A signal peptide spans 1 to 18 (MRPLSSAALLSAIGAVAA). The CBM1 domain occupies 19 to 54 (QVGPWGQCGGQSYTGGTSCVSGWACVFLNDWYSQCQ). The disordered stretch occupies residues 79–110 (STSVSATAPPSSTSSSTASVSSSTSSTPIPTS). A ser-rich linker region spans residues 79–113 (STSVSATAPPSSTSSSTASVSSSTSSTPIPTSSGS). A catalytic region spans residues 114 to 456 (FVKAEGLKFN…CAVIDHVSRI (343 aa)). Residues tryptophan 166 and asparagine 280 each contribute to the substrate site. Glutamate 281 functions as the Proton donor in the catalytic mechanism. Tyrosine 356 serves as a coordination point for substrate. Glutamate 390 acts as the Nucleophile in catalysis. Residue tryptophan 420 participates in substrate binding.

This sequence belongs to the glycosyl hydrolase 5 (cellulase A) family.

It is found in the secreted. The enzyme catalyses Random hydrolysis of (1-&gt;4)-beta-D-mannosidic linkages in mannans, galactomannans and glucomannans.. Endo-1,4-mannanase, a crucial enzyme for depolymerization of seed galactomannans and wood galactoglucomannans. The polypeptide is Probable mannan endo-1,4-beta-mannosidase F (manF) (Neosartorya fischeri (strain ATCC 1020 / DSM 3700 / CBS 544.65 / FGSC A1164 / JCM 1740 / NRRL 181 / WB 181) (Aspergillus fischerianus)).